The sequence spans 232 residues: 5'-methylthioadenosine/S-adenosylhomocysteine nucleosidase (232 aa).

Glu12 (proton acceptor) is an active-site residue. Substrate is bound by residues Gly78, Met153, and 174 to 175; that span reads ME. The active-site Proton donor is Asp198.

This sequence belongs to the PNP/UDP phosphorylase family. MtnN subfamily.

It catalyses the reaction S-adenosyl-L-homocysteine + H2O = S-(5-deoxy-D-ribos-5-yl)-L-homocysteine + adenine. It carries out the reaction S-methyl-5'-thioadenosine + H2O = 5-(methylsulfanyl)-D-ribose + adenine. The enzyme catalyses 5'-deoxyadenosine + H2O = 5-deoxy-D-ribose + adenine. It functions in the pathway amino-acid biosynthesis; L-methionine biosynthesis via salvage pathway; S-methyl-5-thio-alpha-D-ribose 1-phosphate from S-methyl-5'-thioadenosine (hydrolase route): step 1/2. In terms of biological role, catalyzes the irreversible cleavage of the glycosidic bond in both 5'-methylthioadenosine (MTA) and S-adenosylhomocysteine (SAH/AdoHcy) to adenine and the corresponding thioribose, 5'-methylthioribose and S-ribosylhomocysteine, respectively. Also cleaves 5'-deoxyadenosine, a toxic by-product of radical S-adenosylmethionine (SAM) enzymes, into 5-deoxyribose and adenine. The polypeptide is 5'-methylthioadenosine/S-adenosylhomocysteine nucleosidase (Geobacillus sp. (strain WCH70)).